We begin with the raw amino-acid sequence, 70 residues long: MKYILLGLLLMVVLANANRLADPNCGVCTLRSICFMEKESCPKGFKCCAFKRQDKPGSKITRGCCVKNKN.

Positions 1–17 are cleaved as a signal peptide; that stretch reads MKYILLGLLLMVVLANA.

Belongs to the scutigerotoxin-02 family. In terms of processing, contains 4 disulfide bonds. As to expression, expressed by the venom gland.

It localises to the secreted. The sequence is that of U-scutigerotoxin(02)-Tl1a from Thereuopoda longicornis (Long-legged centipede).